We begin with the raw amino-acid sequence, 447 residues long: UDP-glycosyltransferase 76E5 (447 aa).

Residues Ser-272, Ala-324–Gln-326, His-341–Glu-349, and Asn-363–Gln-366 each bind UDP-alpha-D-glucose.

The protein belongs to the UDP-glycosyltransferase family.

The polypeptide is UDP-glycosyltransferase 76E5 (UGT76E5) (Arabidopsis thaliana (Mouse-ear cress)).